Reading from the N-terminus, the 181-residue chain is MKQLLDFLPLIIFFAVYKFFDIYVASGALIAATALQLVISYMLYKKLEKMHLITFVMVTVFGSLTLILHDDSFIKWKVTIVYALFAIALGVSQIMNKPLLKSMLGKELIVEDKVWARVTWYWVSFFVVCGLVNIYVAFSLSQETWVNFKVFGLTALTLINTVLTVLYLFKNMSEEDRKELK.

A run of 5 helical transmembrane segments spans residues 10-30 (LIIFFAVYKFFDIYVASGALI), 50-70 (MHLITFVMVTVFGSLTLILHD), 72-92 (SFIKWKVTIVYALFAIALGVS), 118-138 (VTWYWVSFFVVCGLVNIYVAF), and 148-168 (FKVFGLTALTLINTVLTVLYL).

Belongs to the YciB family.

The protein resides in the cell inner membrane. Its function is as follows. Plays a role in cell envelope biogenesis, maintenance of cell envelope integrity and membrane homeostasis. The sequence is that of Inner membrane-spanning protein YciB from Shewanella halifaxensis (strain HAW-EB4).